Reading from the N-terminus, the 390-residue chain is Succinyl-diaminopimelate desuccinylase (390 aa).

Histidine 74 contacts Zn(2+). Aspartate 76 is an active-site residue. Position 107 (aspartate 107) interacts with Zn(2+). Glutamate 140 acts as the Proton acceptor in catalysis. Residues glutamate 141, glutamate 169, and histidine 363 each contribute to the Zn(2+) site.

This sequence belongs to the peptidase M20A family. DapE subfamily. As to quaternary structure, homodimer. It depends on Zn(2+) as a cofactor. The cofactor is Co(2+).

The enzyme catalyses N-succinyl-(2S,6S)-2,6-diaminopimelate + H2O = (2S,6S)-2,6-diaminopimelate + succinate. Its pathway is amino-acid biosynthesis; L-lysine biosynthesis via DAP pathway; LL-2,6-diaminopimelate from (S)-tetrahydrodipicolinate (succinylase route): step 3/3. Functionally, catalyzes the hydrolysis of N-succinyl-L,L-diaminopimelic acid (SDAP), forming succinate and LL-2,6-diaminopimelate (DAP), an intermediate involved in the bacterial biosynthesis of lysine and meso-diaminopimelic acid, an essential component of bacterial cell walls. This is Succinyl-diaminopimelate desuccinylase from Bartonella quintana (strain Toulouse) (Rochalimaea quintana).